The sequence spans 288 residues: Acidic endochitinase SP2 (288 aa).

Residues 1–27 (MTLLLKNTLYLALIISVISSFPTSLFA) form the signal peptide. At Gln-28 the chain carries Pyrrolidone carboxylic acid. The 36-residue stretch at 28–63 (QNCGCAPNLCCSNFGFCGTGTPYCGVGNCQSGPCEG) folds into the Chitin-binding type-1 domain. 4 disulfide bridges follow: Cys-30–Cys-38, Cys-32–Cys-44, Cys-37–Cys-51, and Cys-56–Cys-61. Residues 64 to 78 (GTPTTPTTPTTPTTP) show a composition bias toward low complexity. The interval 64–84 (GTPTTPTTPTTPTTPGTGGGG) is disordered. The interval 64–85 (GTPTTPTTPTTPTTPGTGGGGS) is hinge region (Gly/Pro/Thr-rich). Residues Pro-66, Pro-69, Pro-72, and Pro-75 each carry the 4-hydroxyproline modification. Tandem repeats lie at residues 67–69 (TTP), 70–72 (TTP), 73–75 (TTP), and 76–78 (TTP). A 4 X 3 AA tandem repeats of T-T-P region spans residues 67–78 (TTPTTPTTPTTP). Residues 86–288 (SVSDIVSQAF…GVAPGDNLTC (203 aa)) are catalytic. 3 disulfide bridges follow: Cys-107/Cys-154, Cys-168/Cys-178, and Cys-256/Cys-288. The active-site Proton donor is Glu-149.

Belongs to the glycosyl hydrolase 19 family. Chitinase class I subfamily. Post-translationally, O-glycosylated on hydroxyprolines; contains xylose. As to expression, localized to infected area.

It is found in the secreted. Its subcellular location is the extracellular space. It catalyses the reaction Random endo-hydrolysis of N-acetyl-beta-D-glucosaminide (1-&gt;4)-beta-linkages in chitin and chitodextrins.. Functionally, defense against chitin-containing fungal pathogens. This Beta vulgaris (Sugar beet) protein is Acidic endochitinase SP2 (SP2).